We begin with the raw amino-acid sequence, 397 residues long: Nicotinate phosphoribosyltransferase (397 aa).

Position 221 is a phosphohistidine; by autocatalysis (H221).

Belongs to the NAPRTase family. Transiently phosphorylated on a His residue during the reaction cycle. Phosphorylation strongly increases the affinity for substrates and increases the rate of nicotinate D-ribonucleotide production. Dephosphorylation regenerates the low-affinity form of the enzyme, leading to product release.

It carries out the reaction nicotinate + 5-phospho-alpha-D-ribose 1-diphosphate + ATP + H2O = nicotinate beta-D-ribonucleotide + ADP + phosphate + diphosphate. Its pathway is cofactor biosynthesis; NAD(+) biosynthesis; nicotinate D-ribonucleotide from nicotinate: step 1/1. Functionally, catalyzes the synthesis of beta-nicotinate D-ribonucleotide from nicotinate and 5-phospho-D-ribose 1-phosphate at the expense of ATP. This Herminiimonas arsenicoxydans protein is Nicotinate phosphoribosyltransferase.